Here is a 204-residue protein sequence, read N- to C-terminus: Lipoprotein signal peptidase (204 aa).

The segment at 1–42 (MAEAERIIGTPDIPDAAGEGQERPDADPEREQQEQEQAPERT) is disordered. Positions 20 to 42 (GQERPDADPEREQQEQEQAPERT) are enriched in basic and acidic residues. The next 3 membrane-spanning stretches (helical) occupy residues 50–70 (VLFA…MLVV), 100–120 (FGEA…VVIA), and 126–146 (LHSL…LGNL). Active-site residues include Asp163 and Asp177. Residues 170-190 (FAVFNLADSAIVCGGILIVIL) form a helical membrane-spanning segment.

This sequence belongs to the peptidase A8 family.

It is found in the cell membrane. It catalyses the reaction Release of signal peptides from bacterial membrane prolipoproteins. Hydrolyzes -Xaa-Yaa-Zaa-|-(S,diacylglyceryl)Cys-, in which Xaa is hydrophobic (preferably Leu), and Yaa (Ala or Ser) and Zaa (Gly or Ala) have small, neutral side chains.. The protein operates within protein modification; lipoprotein biosynthesis (signal peptide cleavage). Its function is as follows. This protein specifically catalyzes the removal of signal peptides from prolipoproteins. The sequence is that of Lipoprotein signal peptidase from Streptomyces coelicolor (strain ATCC BAA-471 / A3(2) / M145).